Reading from the N-terminus, the 476-residue chain is Homeobox even-skipped homolog protein 2 (476 aa).

Disordered regions lie at residues 82–113 and 142–185; these read TGSE…AEAD and KGYA…GSGA. Low complexity-rich tracts occupy residues 84-96 and 147-159; these read SEST…SSAA and SGSA…SASG. Residues 160-183 are compositionally biased toward gly residues; it reads SGLGSLHGGSGGSGGSAALGGSGS. Residues 188-247 constitute a DNA-binding region (homeobox); the sequence is VRRYRTAFTREQIARLEKEFYRENYVSRPRRCELAAALNLPETTIKVWFQNRRMKDKRQR.

Belongs to the even-skipped homeobox family.

The protein resides in the nucleus. This is Homeobox even-skipped homolog protein 2 (EVX2) from Homo sapiens (Human).